A 177-amino-acid polypeptide reads, in one-letter code: NAD(P)H-quinone oxidoreductase subunit 6, chloroplastic (177 aa).

5 consecutive transmembrane segments (helical) span residues 10–30 (ILVVFLGLVLILGGLGVVLFT), 33–53 (IYSAFSLGLVLICVSLFYILL), 61–81 (AQLLIYVGAINVLILFAVMFM), 92–112 (LWTVGDGVTSLVCTSILFLLI), and 152–172 (FFLPFELISIILLVALIGAIS).

This sequence belongs to the complex I subunit 6 family. In terms of assembly, NDH is composed of at least 16 different subunits, 5 of which are encoded in the nucleus.

The protein localises to the plastid. Its subcellular location is the chloroplast thylakoid membrane. The enzyme catalyses a plastoquinone + NADH + (n+1) H(+)(in) = a plastoquinol + NAD(+) + n H(+)(out). The catalysed reaction is a plastoquinone + NADPH + (n+1) H(+)(in) = a plastoquinol + NADP(+) + n H(+)(out). In terms of biological role, NDH shuttles electrons from NAD(P)H:plastoquinone, via FMN and iron-sulfur (Fe-S) centers, to quinones in the photosynthetic chain and possibly in a chloroplast respiratory chain. The immediate electron acceptor for the enzyme in this species is believed to be plastoquinone. Couples the redox reaction to proton translocation, and thus conserves the redox energy in a proton gradient. In Lemna minor (Common duckweed), this protein is NAD(P)H-quinone oxidoreductase subunit 6, chloroplastic (ndhG).